Here is a 110-residue protein sequence, read N- to C-terminus: Large ribosomal subunit protein uL22 (110 aa).

This sequence belongs to the universal ribosomal protein uL22 family. Part of the 50S ribosomal subunit.

In terms of biological role, this protein binds specifically to 23S rRNA; its binding is stimulated by other ribosomal proteins, e.g. L4, L17, and L20. It is important during the early stages of 50S assembly. It makes multiple contacts with different domains of the 23S rRNA in the assembled 50S subunit and ribosome. Functionally, the globular domain of the protein is located near the polypeptide exit tunnel on the outside of the subunit, while an extended beta-hairpin is found that lines the wall of the exit tunnel in the center of the 70S ribosome. This chain is Large ribosomal subunit protein uL22, found in Pseudomonas savastanoi pv. phaseolicola (strain 1448A / Race 6) (Pseudomonas syringae pv. phaseolicola (strain 1448A / Race 6)).